A 334-amino-acid chain; its full sequence is ADP-L-glycero-D-manno-heptose-6-epimerase (334 aa).

NADP(+) contacts are provided by residues 11-12 (FI), 32-33 (DN), K39, K54, 77-81 (QGACS), and N94. Y141 acts as the Proton acceptor in catalysis. Position 145 (K145) interacts with NADP(+). N171 is a substrate binding site. Residues V172 and K180 each contribute to the NADP(+) site. Catalysis depends on K180, which acts as the Proton acceptor. Substrate contacts are provided by residues R182, H189, 203 to 206 (FGSN), R216, and Y295.

The protein belongs to the NAD(P)-dependent epimerase/dehydratase family. HldD subfamily. In terms of assembly, homopentamer. It depends on NADP(+) as a cofactor.

It catalyses the reaction ADP-D-glycero-beta-D-manno-heptose = ADP-L-glycero-beta-D-manno-heptose. It participates in nucleotide-sugar biosynthesis; ADP-L-glycero-beta-D-manno-heptose biosynthesis; ADP-L-glycero-beta-D-manno-heptose from D-glycero-beta-D-manno-heptose 7-phosphate: step 4/4. In terms of biological role, catalyzes the interconversion between ADP-D-glycero-beta-D-manno-heptose and ADP-L-glycero-beta-D-manno-heptose via an epimerization at carbon 6 of the heptose. This is ADP-L-glycero-D-manno-heptose-6-epimerase from Neisseria meningitidis serogroup C (strain 053442).